The following is a 227-amino-acid chain: MAHSFQLGFQDATSPIMEELLHFHDHTLMIVFLISSLVLYIITLMLTTKLTHTSTMDAQEVETVWTILPAIILILIALPSLRILYLMDEINTPSLTVKTMGHQWYWSYEYTDYEDLNFDSYMIPTADLKPGELRLLEVDNRVVLPMELPIRMLISSEDVLHSWAVPSLGLKTDAIPGRLNQATLMSTRPGLYYGQCSEICGSNHSFMPIVLELVPLKHFENWSTSMI.

Residues 1-14 (MAHSFQLGFQDATS) lie on the Mitochondrial intermembrane side of the membrane. The chain crosses the membrane as a helical span at residues 15-45 (PIMEELLHFHDHTLMIVFLISSLVLYIITLM). Over 46–59 (LTTKLTHTSTMDAQ) the chain is Mitochondrial matrix. Residues 60–87 (EVETVWTILPAIILILIALPSLRILYLM) traverse the membrane as a helical segment. Residues 88–227 (DEINTPSLTV…HFENWSTSMI (140 aa)) are Mitochondrial intermembrane-facing. 6 residues coordinate Cu cation: His161, Cys196, Glu198, Cys200, His204, and Met207. Glu198 is a binding site for Mg(2+).

Belongs to the cytochrome c oxidase subunit 2 family. In terms of assembly, component of the cytochrome c oxidase (complex IV, CIV), a multisubunit enzyme composed of 14 subunits. The complex is composed of a catalytic core of 3 subunits MT-CO1, MT-CO2 and MT-CO3, encoded in the mitochondrial DNA, and 11 supernumerary subunits COX4I, COX5A, COX5B, COX6A, COX6B, COX6C, COX7A, COX7B, COX7C, COX8 and NDUFA4, which are encoded in the nuclear genome. The complex exists as a monomer or a dimer and forms supercomplexes (SCs) in the inner mitochondrial membrane with NADH-ubiquinone oxidoreductase (complex I, CI) and ubiquinol-cytochrome c oxidoreductase (cytochrome b-c1 complex, complex III, CIII), resulting in different assemblies (supercomplex SCI(1)III(2)IV(1) and megacomplex MCI(2)III(2)IV(2)). Found in a complex with TMEM177, COA6, COX18, COX20, SCO1 and SCO2. Interacts with TMEM177 in a COX20-dependent manner. Interacts with COX20. Interacts with COX16. The cofactor is Cu cation.

It localises to the mitochondrion inner membrane. It catalyses the reaction 4 Fe(II)-[cytochrome c] + O2 + 8 H(+)(in) = 4 Fe(III)-[cytochrome c] + 2 H2O + 4 H(+)(out). In terms of biological role, component of the cytochrome c oxidase, the last enzyme in the mitochondrial electron transport chain which drives oxidative phosphorylation. The respiratory chain contains 3 multisubunit complexes succinate dehydrogenase (complex II, CII), ubiquinol-cytochrome c oxidoreductase (cytochrome b-c1 complex, complex III, CIII) and cytochrome c oxidase (complex IV, CIV), that cooperate to transfer electrons derived from NADH and succinate to molecular oxygen, creating an electrochemical gradient over the inner membrane that drives transmembrane transport and the ATP synthase. Cytochrome c oxidase is the component of the respiratory chain that catalyzes the reduction of oxygen to water. Electrons originating from reduced cytochrome c in the intermembrane space (IMS) are transferred via the dinuclear copper A center (CU(A)) of subunit 2 and heme A of subunit 1 to the active site in subunit 1, a binuclear center (BNC) formed by heme A3 and copper B (CU(B)). The BNC reduces molecular oxygen to 2 water molecules using 4 electrons from cytochrome c in the IMS and 4 protons from the mitochondrial matrix. In Cephalopachus bancanus (Western tarsier), this protein is Cytochrome c oxidase subunit 2 (MT-CO2).